A 660-amino-acid polypeptide reads, in one-letter code: Zeaxanthin epoxidase, chloroplastic (660 aa).

A chloroplast-targeting transit peptide spans 1–49 (MYASSARDGIPGKWCNARRKQLPLLISKDFPAELYHSLPCKSLENGHIK). FAD contacts are provided by residues 79–107 (KVLV…LVFE) and 357–370 (TFSW…LLGD). Residues 545–609 (LVLSRDENMP…HGTWFIDNEG (65 aa)) enclose the FHA domain.

It depends on FAD as a cofactor.

It is found in the plastid. The protein resides in the chloroplast membrane. Its subcellular location is the chloroplast thylakoid membrane. It catalyses the reaction all-trans-zeaxanthin + 4 reduced [2Fe-2S]-[ferredoxin] + 2 O2 + 4 H(+) = all-trans-violaxanthin + 4 oxidized [2Fe-2S]-[ferredoxin] + 2 H2O. The enzyme catalyses all-trans-zeaxanthin + 2 reduced [2Fe-2S]-[ferredoxin] + O2 + 2 H(+) = all-trans-antheraxanthin + 2 oxidized [2Fe-2S]-[ferredoxin] + H2O. It carries out the reaction all-trans-antheraxanthin + 2 reduced [2Fe-2S]-[ferredoxin] + O2 + 2 H(+) = all-trans-violaxanthin + 2 oxidized [2Fe-2S]-[ferredoxin] + H2O. The catalysed reaction is beta-cryptoxanthin + 2 reduced [2Fe-2S]-[ferredoxin] + O2 + 2 H(+) = (5R,6S)-5,6-epoxi-beta-cryptoxanthin + 2 oxidized [2Fe-2S]-[ferredoxin] + H2O. Its pathway is plant hormone biosynthesis; abscisate biosynthesis. Converts zeaxanthin into antheraxanthin and subsequently violaxanthin. Also acts on beta-cryptoxanthin. Involved in the epoxidation of zeaxanthin. This chain is Zeaxanthin epoxidase, chloroplastic, found in Capsicum annuum (Capsicum pepper).